The sequence spans 155 residues: Interleukin-2 (155 aa).

The signal sequence occupies residues Met-1 to Gly-20. O-linked (GalNAc...) threonine glycosylation is present at Thr-23. Cysteines 79 and 127 form a disulfide.

This sequence belongs to the IL-2 family.

Its subcellular location is the secreted. Its function is as follows. Cytokine produced by activated CD4-positive helper T-cells and to a lesser extend activated CD8-positive T-cells and natural killer (NK) cells that plays pivotal roles in the immune response and tolerance. Binds to a receptor complex composed of either the high-affinity trimeric IL-2R (IL2RA/CD25, IL2RB/CD122 and IL2RG/CD132) or the low-affinity dimeric IL-2R (IL2RB and IL2RG). Interaction with the receptor leads to oligomerization and conformation changes in the IL-2R subunits resulting in downstream signaling starting with phosphorylation of JAK1 and JAK3. In turn, JAK1 and JAK3 phosphorylate the receptor to form a docking site leading to the phosphorylation of several substrates including STAT5. This process leads to activation of several pathways including STAT, phosphoinositide-3-kinase/PI3K and mitogen-activated protein kinase/MAPK pathways. Functions as a T-cell growth factor and can increase NK-cell cytolytic activity as well. Promotes strong proliferation of activated B-cells and subsequently immunoglobulin production. Plays a pivotal role in regulating the adaptive immune system by controlling the survival and proliferation of regulatory T-cells, which are required for the maintenance of immune tolerance. Moreover, participates in the differentiation and homeostasis of effector T-cell subsets, including Th1, Th2, Th17 as well as memory CD8-positive T-cells. The protein is Interleukin-2 (IL2) of Bubalus bubalis (Domestic water buffalo).